The primary structure comprises 358 residues: Replication factor C subunit 5 (358 aa).

The protein belongs to the activator 1 small subunits family. As to quaternary structure, heteropentamer of subunits rfc1, rfc2, rfc3, rfc4 and rfc5 that forms a complex (RFC) with PCNA in the presence of ATP. Two other complexes exist where rfc1 can be replaced by either ctf18 or elg1 to form the ctf18-RFC or the elg1-RFC complexes respectively.

It is found in the nucleus. In terms of biological role, the elongation of primed DNA templates by DNA polymerase delta and epsilon requires the action of the accessory proteins PCNA and activator 1. This Schizosaccharomyces pombe (strain 972 / ATCC 24843) (Fission yeast) protein is Replication factor C subunit 5 (rfc5).